The chain runs to 276 residues: Proteasome subunit beta type-8 (276 aa).

The segment at 1-33 (MALLDVCGAPRGQRPESALPVAGSGRRSDPGHY) is disordered. The propeptide at 1-72 (MALLDVCGAP…RNVQIEMAHG (72 aa)) is removed in mature form. Asp5 is subject to Phosphothreonine. Thr73 acts as the Nucleophile in catalysis.

The protein belongs to the peptidase T1B family. In terms of assembly, the 26S proteasome consists of a 20S proteasome core and two 19S regulatory subunits. The 20S proteasome core is composed of 28 subunits that are arranged in four stacked rings, resulting in a barrel-shaped structure. The two end rings are each formed by seven alpha subunits, and the two central rings are each formed by seven beta subunits. The catalytic chamber with the active sites is on the inside of the barrel. Component of the immunoproteasome, where it displaces the equivalent housekeeping subunit PSMB5. Component of the spermatoproteasome, a form of the proteasome specifically found in testis. Directly interacts with POMP. Interacts with TAP1. (Microbial infection) Interacts with HIV-1 TAT protein. Post-translationally, autocleaved. The resulting N-terminal Thr residue of the mature subunit is responsible for the nucleophile proteolytic activity.

It localises to the cytoplasm. Its subcellular location is the nucleus. The enzyme catalyses Cleavage of peptide bonds with very broad specificity.. In terms of biological role, the proteasome is a multicatalytic proteinase complex which is characterized by its ability to cleave peptides with Arg, Phe, Tyr, Leu, and Glu adjacent to the leaving group at neutral or slightly basic pH. The proteasome has an ATP-dependent proteolytic activity. This subunit is involved in antigen processing to generate class I binding peptides. Replacement of PSMB5 by PSMB8 increases the capacity of the immunoproteasome to cleave model peptides after hydrophobic and basic residues. Involved in the generation of spliced peptides resulting from the ligation of two separate proteasomal cleavage products that are not contiguous in the parental protein. Acts as a major component of interferon gamma-induced sensitivity. Plays a key role in apoptosis via the degradation of the apoptotic inhibitor MCL1. May be involved in the inflammatory response pathway. In cancer cells, substitution of isoform 1 (E2) by isoform 2 (E1) results in immunoproteasome deficiency. Required for the differentiation of preadipocytes into adipocytes. The protein is Proteasome subunit beta type-8 (PSMB8) of Homo sapiens (Human).